The following is a 49-amino-acid chain: Large ribosomal subunit protein bL33 (49 aa).

It belongs to the bacterial ribosomal protein bL33 family.

The chain is Large ribosomal subunit protein bL33 from Alkaliphilus oremlandii (strain OhILAs) (Clostridium oremlandii (strain OhILAs)).